Consider the following 392-residue polypeptide: Protein FAM53C (392 aa).

Met-1 is subject to N-acetylmethionine. Residues 77-120 (HLRPPSRGSSPKEQPLSQVLRPEPPDPEKLPVPPAPPSKRHCRS) form a disordered region. Positions 83–93 (RGSSPKEQPLS) are enriched in polar residues. Residues Ser-122 and Ser-162 each carry the phosphoserine modification. 3 disordered regions span residues 141–167 (LWTP…PKRV), 203–303 (SRPC…LDFD), and 340–364 (SASC…EGAV). A compositionally biased stretch (polar residues) spans 203–215 (SRPCATSPQSGSW). A phosphoserine mark is found at Ser-232, Ser-234, Ser-255, Ser-273, and Ser-299. Residues 241 to 256 (ASRFLPSARSSPASSP) show a composition bias toward low complexity. Residues 278-303 (LDARKTGVKRRHEEDPRRLRPSLDFD) show a composition bias toward basic and acidic residues.

Belongs to the FAM53 family.

In Pongo abelii (Sumatran orangutan), this protein is Protein FAM53C.